The chain runs to 353 residues: DNA polymerase IV (353 aa).

The UmuC domain occupies 4–185; the sequence is IIHVDMDCFF…LPLSKIPGVG (182 aa). Residues aspartate 8 and aspartate 103 each coordinate Mg(2+). Glutamate 104 is an active-site residue.

The protein belongs to the DNA polymerase type-Y family. As to quaternary structure, monomer. Mg(2+) serves as cofactor.

It is found in the cytoplasm. It carries out the reaction DNA(n) + a 2'-deoxyribonucleoside 5'-triphosphate = DNA(n+1) + diphosphate. Its function is as follows. Poorly processive, error-prone DNA polymerase involved in untargeted mutagenesis. Copies undamaged DNA at stalled replication forks, which arise in vivo from mismatched or misaligned primer ends. These misaligned primers can be extended by PolIV. Exhibits no 3'-5' exonuclease (proofreading) activity. May be involved in translesional synthesis, in conjunction with the beta clamp from PolIII. This is DNA polymerase IV from Serratia proteamaculans (strain 568).